A 107-amino-acid polypeptide reads, in one-letter code: EPIDERMAL PATTERNING FACTOR-like protein 5 (107 aa).

Residues 1-22 (MGVVLPTLIVYAFLLFFSSSSA) form the signal peptide. Disulfide bonds link Cys64/Cys98, Cys68/Cys74, and Cys71/Cys100.

This sequence belongs to the plant cysteine rich small secretory peptide family. Epidermal patterning factor subfamily. Interacts with ERECTA. As to expression, expressed asymetically in the hypocotyl, on the side proximal to the folded cotyledons at germination. Detected in developing flowers, the chalazal region of ovules and near the root apex, but not in inflorescence stems. Expressed in cotyledons, flowers, adult leaves and fruits.

The protein localises to the secreted. Its function is as follows. Controls stomatal patterning. Mediates differentiation of stomatal lineage cells to pavement cells and stomatal development inhibition. TMM (AC Q9SSD1) functions to dampen or block CLL1 signaling. Acts as a growth-regulatory ligand for ERECTA family receptors. Promotes fruit growth and fertility. This chain is EPIDERMAL PATTERNING FACTOR-like protein 5, found in Arabidopsis thaliana (Mouse-ear cress).